Reading from the N-terminus, the 66-residue chain is Beta-mammal toxin Cv5 (66 aa).

The LCN-type CS-alpha/beta domain maps to 1 to 66 (KEGYIVNYYD…VWPLPKKKCN (66 aa)). Intrachain disulfides connect Cys12-Cys65, Cys16-Cys41, Cys25-Cys46, and Cys29-Cys48.

In terms of tissue distribution, expressed by the venom gland.

The protein resides in the secreted. Is susceptible to be neutralized by human antibodies scFvs 10FG2 and HV. In terms of biological role, beta toxins bind voltage-independently at site-4 of sodium channels (Nav) and reduces peak current and shifts the voltage of activation toward more negative potentials thereby affecting sodium channel activation and promoting spontaneous and repetitive firing. This toxin is moderately toxic to mice. The sequence is that of Beta-mammal toxin Cv5 from Centruroides villegasi (Scorpion).